The following is a 359-amino-acid chain: MTTDLTDRRQLILKLAIQEFIESSQPVASELLVRKYRLNVSPATVRNELAALEELGYLTHLHTSAGRVPTDAGYRYFVENLMDRTPLSATEQRTIRHQFYQVRSELDQWIQLAGAVLARTAQNASVVTPPRAQQARLKHLELISIHDTTALMVLVLHDGTIRQQTLTLDMALSQEELSRRASRINERCADAPVERVEEFLKQERAHEPPGGDALACQVLDLIVKAMHQFNEHLNSDIHSDGLIEILNQPEFSQVERVRRMIEILQSRRALGTLIPRALSSSGVQVVIGGEHSYDEMREYSVVLSRYGGGEIVGVLGVIGPTRMAYPRAISAVRYISAVMSDLLAELYGIEGDTHWEVES.

This sequence belongs to the HrcA family.

Its function is as follows. Negative regulator of class I heat shock genes (grpE-dnaK-dnaJ and groELS operons). Prevents heat-shock induction of these operons. This chain is Heat-inducible transcription repressor HrcA, found in Roseiflexus castenholzii (strain DSM 13941 / HLO8).